The sequence spans 427 residues: Probable protein phosphatase 2C 64 (427 aa).

The tract at residues Met1–Gln36 is disordered. The PPM-type phosphatase domain maps to Thr53 to Leu331. Mn(2+) is bound by residues Asp89, Gly90, Asp276, and Asp322.

It belongs to the PP2C family. Requires Mg(2+) as cofactor. The cofactor is Mn(2+).

The catalysed reaction is O-phospho-L-seryl-[protein] + H2O = L-seryl-[protein] + phosphate. The enzyme catalyses O-phospho-L-threonyl-[protein] + H2O = L-threonyl-[protein] + phosphate. In Oryza sativa subsp. japonica (Rice), this protein is Probable protein phosphatase 2C 64.